The primary structure comprises 133 residues: Small ribosomal subunit protein uS8c (133 aa).

Belongs to the universal ribosomal protein uS8 family. In terms of assembly, part of the 30S ribosomal subunit.

Its subcellular location is the plastid. It is found in the chloroplast. In terms of biological role, one of the primary rRNA binding proteins, it binds directly to 16S rRNA central domain where it helps coordinate assembly of the platform of the 30S subunit. This chain is Small ribosomal subunit protein uS8c (rps8), found in Pyropia yezoensis (Susabi-nori).